The sequence spans 583 residues: Inactive carboxylesterase-like protein VdtD (583 aa).

The first 23 residues, 1 to 23 (MFMTQIVFGIAPTLLKTFSHLTA), serve as a signal peptide directing secretion. 9 N-linked (GlcNAc...) asparagine glycosylation sites follow: asparagine 84, asparagine 109, asparagine 221, asparagine 265, asparagine 307, asparagine 350, asparagine 388, asparagine 448, and asparagine 468.

This sequence belongs to the type-B carboxylesterase/lipase family.

Its pathway is secondary metabolite biosynthesis. In terms of biological role, inactive carboxylesterase-like protein; part of the gene cluster that mediates the biosynthesis of viriditoxin, one of the 'classical' secondary metabolites produced by fungi and that has antibacterial activity. The first step is performed by the polyketide synthase VdtA which condenses one acetyl-CoA and 6 malonyl-CoA units to form the heptaketide monomer backbone of viriditoxin. The product of VdtA is then O-methylated on C7 by the O-methyltransferase VdtC. The O-methyl group is important for the stereoselective coupling of the monomers at the final step of viriditoxin biosynthesis. The short-chain dehydrogenase/reductase VdtF then acts as a stereospecific reductase converting the pyrone to dihydropyrone via the reduction of the C3-C4 double bond. The FAD-binding monooxygenase VdtE then converts the ketone group into a methyl-ester group to yield semi-viriditoxin. Finally, the laccase VdtB is involved in dimerization of 2 semi-viriditoxin molecules to yield the final viriditoxin. VdtB is responsible for the regioselective 6,6'-coupling of semi-viriditoxin, which yields (M)-viriditoxin and (P)-viriditoxin at a ratio of 1:2. The non-catalytic carboxylesterase-like protein VdtD affects the stereochemistical outcome of the coupling. The highly reducing polyketide synthase VdtX is not involved in viriditoxin synthesis, but might possibly play a role in the production of additional metabolites not identified yet. This is Inactive carboxylesterase-like protein VdtD from Byssochlamys spectabilis (Paecilomyces variotii).